A 1268-amino-acid polypeptide reads, in one-letter code: SR-related and CTD-associated factor 8 (1268 aa).

Residues 1-139 (MEAVKTFNSE…PLLDMAAGIP (139 aa)) enclose the CID domain. Threonine 6 carries the post-translational modification Phosphothreonine. Lysine 18 is covalently cross-linked (Glycyl lysine isopeptide (Lys-Gly) (interchain with G-Cter in SUMO1)). The span at 270 to 283 (GEDSEHSEESKKEM) shows a compositional bias: basic and acidic residues. 3 disordered regions span residues 270 to 290 (GEDSEHSEESKKEMPTPQLSH), 322 to 355 (QQQPQKVTPQDSQEGTFGSEHSASPSQGSSQQHF), and 385 to 469 (EIFE…PVRS). The residue at position 273 (serine 273) is a Phosphoserine. Over residues 327–354 (KVTPQDSQEGTFGSEHSASPSQGSSQQH) the composition is skewed to polar residues. Residues 394 to 443 (VAVRSRSRTHSRSRSRSPRKRRSRSRSGSRKRKHRKRSRSHSREKKRKAS) are compositionally biased toward basic residues. Over residues 447 to 461 (SSERRAREREKERQK) the composition is skewed to basic and acidic residues. The region spanning 477-551 (TTLWVGQVDK…KVIKIAWALN (75 aa)) is the RRM domain. At serine 617 the chain carries Phosphoserine. The interval 776-807 (QIPSGENTRPVIPSDIPSSAAMLAQPPGASST) is disordered. Asymmetric dimethylarginine is present on residues arginine 915, arginine 925, and arginine 936. 2 disordered regions span residues 984–1012 (PGRPSIDNVPNPDKRIPLGNDNIQQEGDR) and 1040–1065 (RLDPREGPGRPPLDARDHFGRPPVDM). At arginine 1071 the chain carries Asymmetric dimethylarginine. The interval 1199 to 1268 (ATSQRKGDNV…VVESTETEGT (70 aa)) is disordered. Positions 1249–1262 (GTVAGVESEAVVES) are enriched in low complexity.

As to quaternary structure, interacts with POLR2A; via C-terminal heptapeptide repeat domain (CTD) phosphorylated at 'Ser-2' and 'Ser-5'. Identified in a complex with CDC5L and other spliceosomal proteins.

It localises to the nucleus. The protein resides in the nucleus matrix. Anti-terminator protein required to prevent early mRNA termination during transcription. Together with SCAF4, acts by suppressing the use of early, alternative poly(A) sites, thereby preventing the accumulation of non-functional truncated proteins. Mechanistically, associates with the phosphorylated C-terminal heptapeptide repeat domain (CTD) of the largest RNA polymerase II subunit (POLR2A), and subsequently binds nascent RNA upstream of early polyadenylation sites to prevent premature mRNA transcript cleavage and polyadenylation. Independently of SCAF4, also acts as a positive regulator of transcript elongation. This Mus musculus (Mouse) protein is SR-related and CTD-associated factor 8.